We begin with the raw amino-acid sequence, 394 residues long: Elongation factor Tu (394 aa).

One can recognise a tr-type G domain in the interval 10-204 (KPHVNVGTIG…ALDSYIPEPE (195 aa)). Positions 19-26 (GHVDHGKT) are G1. Residue 19-26 (GHVDHGKT) participates in GTP binding. Thr26 contributes to the Mg(2+) binding site. A G2 region spans residues 60 to 64 (GITIN). Residues 81–84 (DCPG) are G3. GTP-binding positions include 81–85 (DCPGH) and 136–139 (NKCD). The segment at 136-139 (NKCD) is G4. The G5 stretch occupies residues 174–176 (SAL).

It belongs to the TRAFAC class translation factor GTPase superfamily. Classic translation factor GTPase family. EF-Tu/EF-1A subfamily. In terms of assembly, monomer.

It localises to the cytoplasm. The enzyme catalyses GTP + H2O = GDP + phosphate + H(+). Its function is as follows. GTP hydrolase that promotes the GTP-dependent binding of aminoacyl-tRNA to the A-site of ribosomes during protein biosynthesis. The protein is Elongation factor Tu of Sodalis glossinidius (strain morsitans).